The sequence spans 546 residues: uncharacterized protein (546 aa).

The protein belongs to the IIV-6 098R family.

This is an uncharacterized protein from Aedes vexans (Inland floodwater mosquito).